A 370-amino-acid polypeptide reads, in one-letter code: Dihydroorotate dehydrogenase (quinone) (370 aa).

Residues 67–71 and Thr91 contribute to the FMN site; that span reads AGFDK. Lys71 contributes to the substrate binding site. 116–120 serves as a coordination point for substrate; sequence NRMGF. 2 residues coordinate FMN: Asn146 and Asn179. Residue Asn179 coordinates substrate. Ser182 acts as the Nucleophile in catalysis. Residue Asn184 participates in substrate binding. FMN is bound by residues Lys222 and Thr250. 251-252 is a substrate binding site; the sequence is NT. FMN-binding positions include Gly276, Gly305, and 326 to 327; that span reads YS.

Belongs to the dihydroorotate dehydrogenase family. Type 2 subfamily. In terms of assembly, monomer. FMN serves as cofactor.

It is found in the cell membrane. The catalysed reaction is (S)-dihydroorotate + a quinone = orotate + a quinol. It functions in the pathway pyrimidine metabolism; UMP biosynthesis via de novo pathway; orotate from (S)-dihydroorotate (quinone route): step 1/1. Its function is as follows. Catalyzes the conversion of dihydroorotate to orotate with quinone as electron acceptor. This Streptomyces griseus subsp. griseus (strain JCM 4626 / CBS 651.72 / NBRC 13350 / KCC S-0626 / ISP 5235) protein is Dihydroorotate dehydrogenase (quinone).